Here is a 664-residue protein sequence, read N- to C-terminus: Cyclic nucleotide-gated channel alpha-2 (664 aa).

Positions 1–11 (MTEKTNGVKSS) are enriched in polar residues. The disordered stretch occupies residues 1-49 (MTEKTNGVKSSPANNHNHHAPPAIKANGKDDHRTSSRPHSAADDDTSSE). Residues 1 to 144 (MTEKTNGVKS…PAGDWYYCWL (144 aa)) lie on the Cytoplasmic side of the membrane. A compositionally biased stretch (low complexity) spans 12–23 (PANNHNHHAPPA). A helical transmembrane segment spans residues 145–166 (FVIAMPVLYNWCLLVARACFSD). Topologically, residues 167–176 (LQKGYYLVWL) are extracellular. A helical membrane pass occupies residues 177 to 197 (VLDYVSDVVYIADLFIRLRTG). Residues 198–222 (FLEQGLLVKDTKKLRDNYIHTLQFK) lie on the Cytoplasmic side of the membrane. A helical membrane pass occupies residues 223 to 241 (LDVASIIPTDLIYFAVDIH). Over 242-246 (SPEVR) the chain is Extracellular. The helical transmembrane segment at 247–265 (FNRLLHFARMFEFFDRTET) threads the bilayer. The Cytoplasmic portion of the chain corresponds to 266–272 (RTNYPNI). The segment at 270 to 378 (PNIFRISNLV…GNVGSMISNM (109 aa)) is ion conduction pathway. Residues 273–296 (FRISNLVLYILVIIHWNACIYYAI) form a helical membrane-spanning segment. Topologically, residues 297-319 (SKSIGFGVDTWVYPNITDPEYGY) are extracellular. The next 2 membrane-spanning stretches (helical) occupy residues 320 to 354 (LARE…LFVI) and 355 to 379 (FDFL…SNMN). The selectivity filter stretch occupies residues 337–340 (TIGE). The C-linker stretch occupies residues 380–456 (ATRAEFQAKI…STLKKVRIFH (77 aa)). The Cytoplasmic segment spans residues 380–664 (ATRAEFQAKI…SPELAAADEP (285 aa)). Residues 460–580 (AGLLVELVLK…EERGREILMK (121 aa)) form a cyclic nucleotide-binding domain region. Positions 520, 523, 536, and 537 each coordinate 3',5'-cyclic GMP. 3',5'-cyclic AMP contacts are provided by Arg-536 and Thr-537. Residues 597–651 (VQEKLGQLETNMETLYTRFGRLLAEYTGAQQKLKQRITVLETKMKQNNEDDYLSD) adopt a coiled-coil conformation. Positions 641–664 (KQNNEDDYLSDGMNSPELAAADEP) are disordered.

This sequence belongs to the cyclic nucleotide-gated cation channel (TC 1.A.1.5) family. CNGA2 subfamily. As to quaternary structure, the olfactory cyclic nucleotide-gated channel is an heterotetramer composed of CNGA2, CNGA4 and CNGB1b subunits with 2:1:1 stoichiometry.

It localises to the cell projection. The protein resides in the cilium membrane. It catalyses the reaction Ca(2+)(in) = Ca(2+)(out). The catalysed reaction is Na(+)(in) = Na(+)(out). The enzyme catalyses K(+)(in) = K(+)(out). It carries out the reaction NH4(+)(in) = NH4(+)(out). It catalyses the reaction Rb(+)(in) = Rb(+)(out). The catalysed reaction is Li(+)(in) = Li(+)(out). The enzyme catalyses Cs(+)(in) = Cs(+)(out). Functionally, pore-forming subunit of the olfactory cyclic nucleotide-gated channel. Operates in the cilia of olfactory sensory neurons where chemical stimulation of the odorant is converted to an electrical signal. Mediates odorant-induced cAMP-dependent Ca(2+) influx triggering neuron depolarization. The rise of intracellular Ca(2+) levels potentiates the olfactory response by activating Ca(2+)-dependent Cl(-) channels, but it also serves as a negative feedback signal to desensitize the channel for rapid adaptation to odorants. Conducts cAMP- and cGMP-gated ion currents, with permeability for monovalent and divalent cations. The sequence is that of Cyclic nucleotide-gated channel alpha-2 from Homo sapiens (Human).